A 1201-amino-acid polypeptide reads, in one-letter code: Potassium/sodium hyperpolarization-activated cyclic nucleotide-gated channel 4 (1201 aa).

The Cytoplasmic segment spans residues 1–263; that stretch reads MDKLPPSMRK…IIHPYSDFRF (263 aa). A disordered region spans residues 24–183; the sequence is WIMDEEEDGE…PASASCEQPS (160 aa). A compositionally biased stretch (acidic residues) spans 26 to 36; the sequence is MDEEEDGEEEG. A compositionally biased stretch (gly residues) spans 105–118; that stretch reads SRGGGSGGAGGGSS. Positions 121-132 are enriched in basic and acidic residues; it reads HLHDSAEERRLI. At S139 the chain carries Phosphoserine. Residues 164-174 are compositionally biased toward pro residues; that stretch reads ASPPPQQPPQP. Residues 209–260 form an involved in subunit assembly region; it reads GQSGFMQRQFGAMLQPGVNKFSLRMFGSQKAVEREQERVKSAGFWIIHPYSD. The helical transmembrane segment at 264 to 286 threads the bilayer; sequence YWDLTMLLLMVGNLIIIPVGITF. Residues 287–293 lie on the Extracellular side of the membrane; the sequence is FKDENTT. The chain crosses the membrane as a helical span at residues 294 to 314; it reads PWIVFNVVSDTFFLIDLVLNF. The Cytoplasmic segment spans residues 315–336; sequence RTGIVVEDNTEIILDPQRIKMK. The chain crosses the membrane as a helical span at residues 337–359; the sequence is YLKSWFVVDFISSIPVDYIFLIV. At 360-378 the chain is on the extracellular side; it reads ETRIDSEVYKTARALRIVR. A helical; Voltage-sensor transmembrane segment spans residues 379 to 399; that stretch reads FTKILSLLRLLRLSRLIRYIH. Residues 400 to 413 are Cytoplasmic-facing; it reads QWEEIFHMTYDLAS. Residues 414–436 traverse the membrane as a helical segment; the sequence is AVVRIVNLIGMMLLLCHWDGCLQ. Topologically, residues 437-464 are extracellular; the sequence is FLVPMLQDFPHDCWVSINGMVNNSWGKQ. A glycan (N-linked (GlcNAc...) asparagine) is linked at N458. The segment at residues 465–486 is an intramembrane region (pore-forming); sequence YSYALFKAMSHMLCIGYGRQAP. Over 487–491 the chain is Extracellular; sequence VGMSD. A helical transmembrane segment spans residues 492–517; it reads VWLTMLSMIVGATCYAMFIGHATALI. Residues 518 to 1201 lie on the Cytoplasmic side of the membrane; that stretch reads QSLDSSRRQY…PVRSKLPSNL (684 aa). Positions 559, 562, 564, and 566 each coordinate 3',5'-cyclic GMP. G659, E660, C662, R669, T670, V673, and R710 together coordinate 3',5'-cyclic AMP. Disordered stretches follow at residues 804-902 and 914-1201; these read AIFR…TAAA and ALGG…PSNL. 2 stretches are compositionally biased toward low complexity: residues 831–856 and 866–880; these read SLIP…SSSS and SAPP…SSSS. Residues 881–894 are compositionally biased toward pro residues; sequence SPPPGACGSPPAPT. Composition is skewed to low complexity over residues 915–939 and 967–995; these read LGGS…SPQA and RSPS…SSTP. Over residues 1029–1042 the composition is skewed to pro residues; the sequence is GHSPGPPRTFPSAP. A compositionally biased stretch (low complexity) spans 1045–1056; the sequence is ASGSHGSLLLPP. Phosphoserine occurs at positions 1105 and 1108. Positions 1122 to 1134 are enriched in gly residues; that stretch reads AGGGSGSSGGLGP.

This sequence belongs to the potassium channel HCN family. Homotetramer. The potassium channel is composed of a homo- or heterotetrameric complex of pore-forming subunits. Interacts with PEX5L with a 4:4 HCN4:PEX5L stoichiometry; reduces the effects of cAMP on the voltage-dependence and rate of activation. Interacts with IRAG1; regulates HCN4 channel activity. Interacts with IRAG2; regulates HCN4 channel activity. S-palmitoylated. Detected in a subset of elongated cells in taste buds.

The protein resides in the cell membrane. The catalysed reaction is K(+)(in) = K(+)(out). It catalyses the reaction Na(+)(in) = Na(+)(out). With respect to regulation, activated by cAMP, and to a lesser extent by cGMP and cCMP. cAMP binding causes a conformation change that leads to the assembly of an active tetramer and channel opening. Binding of cAMP removes a tonic inhibition conferred by cyclic nucleotide-binding domain (CNBD) on channel opening. Cyclic dinucleotides can modulate HCN4 channel; cyclic dinucleotides acting as potent antagonists of cAMP. Inhibited by extracellular Cs(+) ions. Auxiliary subunits can also regulate HCN4 channel. IRAG1 causes a gain-of-function by shifting HCN4 activation to more depolarized membrane potentials in the absence of cAMP. In contrast, IRAG2 causes a loss-of-function by inhibiting cAMP-dependent potentiation of HCN4 activation. Its function is as follows. Hyperpolarization-activated ion channel that are permeable to Na(+) and K(+) ions with very slow activation and inactivation. Exhibits higher selectivity for K(+) over Na(+) ions. Contributes to the native pacemaker currents in heart (If) that regulate the rhythm of heart beat. Contributes to the native pacemaker currents in neurons (Ih). May mediate responses to sour stimuli. The protein is Potassium/sodium hyperpolarization-activated cyclic nucleotide-gated channel 4 (Hcn4) of Mus musculus (Mouse).